The following is a 1774-amino-acid chain: Kinesin-like protein KIF20B (1774 aa).

Residues tyrosine 58 to valine 477 enclose the Kinesin motor domain. Glycine 152–threonine 159 contacts ATP. Residue serine 486 is modified to Phosphoserine. Coiled-coil stretches lie at residues glutamate 525–glutamate 601 and glutamine 705–alanine 747. The span at glutamate 538–serine 555 shows a compositional bias: acidic residues. Disordered regions lie at residues glutamate 538 to lysine 557 and glutamate 740 to lysine 799. Over residues serine 741 to glutamine 778 the composition is skewed to polar residues. Basic and acidic residues predominate over residues threonine 779–glutamate 788. Residues serine 824–arginine 946 are a coiled coil. Serine 950 carries the post-translational modification Phosphoserine. The interval glutamate 1002–serine 1059 is necessary and sufficient for interaction with SHTN1. Positions lysine 1021–alanine 1507 form a coiled coil. A phosphoserine mark is found at serine 1107 and serine 1542. An interaction with PIN1 region spans residues threonine 1514–lysine 1774. Residue threonine 1598 is modified to Phosphothreonine; by CDK1. Serine 1612 is subject to Phosphoserine. The segment at lysine 1625 to serine 1663 is disordered. Over residues valine 1638–lysine 1651 the composition is skewed to basic and acidic residues. Phosphoserine is present on residues serine 1669 and serine 1694.

It belongs to the TRAFAC class myosin-kinesin ATPase superfamily. Kinesin family. In terms of assembly, oligomerizes (via kinesin motor domain). Associates with microtubules. Interacts (via C-terminal globular tail region) with PIN1 (via WW domain). Interacts with PRC1. Interacts with SHTN1 (via N-terminus); the interaction is direct and promotes the association of SHTN1 to microtubules in primary neurons. Associates with microtubules. In terms of processing, phosphorylated during mitosis by CDK1. Expressed in the brain (at protein level).

It localises to the nucleus. Its subcellular location is the cytoplasm. It is found in the cytoskeleton. The protein localises to the microtubule organizing center. The protein resides in the centrosome. It localises to the nucleolus. Its subcellular location is the nucleoplasm. It is found in the spindle. The protein localises to the spindle pole. The protein resides in the midbody. It localises to the cell projection. Its subcellular location is the axon. It is found in the growth cone. Its function is as follows. Plus-end-directed motor enzyme that is required for completion of cytokinesis. Required for proper midbody organization and abscission in polarized cortical stem cells. Plays a role in the regulation of neuronal polarization by mediating the transport of specific cargos. Participates in the mobilization of SHTN1 and in the accumulation of PIP3 in the growth cone of primary hippocampal neurons in a tubulin and actin-dependent manner. In the developing telencephalon, cooperates with SHTN1 to promote both the transition from the multipolar to the bipolar stage and the radial migration of cortical neurons from the ventricular zone toward the superficial layer of the neocortex. Involved in cerebral cortex growth. Acts as an oncogene for promoting bladder cancer cells proliferation, apoptosis inhibition and carcinogenic progression. This is Kinesin-like protein KIF20B from Mus musculus (Mouse).